The sequence spans 297 residues: Phosphoribosylaminoimidazole-succinocarboxamide synthase (297 aa).

The protein belongs to the SAICAR synthetase family.

The enzyme catalyses 5-amino-1-(5-phospho-D-ribosyl)imidazole-4-carboxylate + L-aspartate + ATP = (2S)-2-[5-amino-1-(5-phospho-beta-D-ribosyl)imidazole-4-carboxamido]succinate + ADP + phosphate + 2 H(+). The protein operates within purine metabolism; IMP biosynthesis via de novo pathway; 5-amino-1-(5-phospho-D-ribosyl)imidazole-4-carboxamide from 5-amino-1-(5-phospho-D-ribosyl)imidazole-4-carboxylate: step 1/2. This Corynebacterium urealyticum (strain ATCC 43042 / DSM 7109) protein is Phosphoribosylaminoimidazole-succinocarboxamide synthase.